A 515-amino-acid chain; its full sequence is Maturase K (515 aa).

The protein belongs to the intron maturase 2 family. MatK subfamily.

The protein resides in the plastid. It localises to the chloroplast. Usually encoded in the trnK tRNA gene intron. Probably assists in splicing its own and other chloroplast group II introns. The sequence is that of Maturase K from Picea mariana (Black spruce).